A 176-amino-acid chain; its full sequence is NAD(P)H-quinone oxidoreductase subunit 6, chloroplastic (176 aa).

A run of 5 helical transmembrane segments spans residues 10–30 (FLLVFLGSGLILGGLGVVLLP), 33–53 (IYSAFSLGFVLVCISLFYILL), 61–81 (AQLLIYVGAINVLIIFAVMFM), 92–112 (LWTIGDGVTSVVCTGLFISLI), and 152–172 (FFLPFELVSIILLVALIGAIA).

The protein belongs to the complex I subunit 6 family. NDH is composed of at least 16 different subunits, 5 of which are encoded in the nucleus.

Its subcellular location is the plastid. It is found in the chloroplast thylakoid membrane. The catalysed reaction is a plastoquinone + NADH + (n+1) H(+)(in) = a plastoquinol + NAD(+) + n H(+)(out). It carries out the reaction a plastoquinone + NADPH + (n+1) H(+)(in) = a plastoquinol + NADP(+) + n H(+)(out). Its function is as follows. NDH shuttles electrons from NAD(P)H:plastoquinone, via FMN and iron-sulfur (Fe-S) centers, to quinones in the photosynthetic chain and possibly in a chloroplast respiratory chain. The immediate electron acceptor for the enzyme in this species is believed to be plastoquinone. Couples the redox reaction to proton translocation, and thus conserves the redox energy in a proton gradient. The polypeptide is NAD(P)H-quinone oxidoreductase subunit 6, chloroplastic (ndhG) (Coffea arabica (Arabian coffee)).